The sequence spans 421 residues: 3-isopropylmalate dehydratase large subunit (421 aa).

The [4Fe-4S] cluster site is built by Cys-302, Cys-362, and Cys-365.

This sequence belongs to the aconitase/IPM isomerase family. LeuC type 2 subfamily. As to quaternary structure, heterodimer of LeuC and LeuD. [4Fe-4S] cluster serves as cofactor.

The catalysed reaction is (2R,3S)-3-isopropylmalate = (2S)-2-isopropylmalate. It participates in amino-acid biosynthesis; L-leucine biosynthesis; L-leucine from 3-methyl-2-oxobutanoate: step 2/4. Functionally, catalyzes the isomerization between 2-isopropylmalate and 3-isopropylmalate, via the formation of 2-isopropylmaleate. The sequence is that of 3-isopropylmalate dehydratase large subunit from Campylobacter fetus subsp. fetus (strain 82-40).